The chain runs to 314 residues: Testis-specific Y-encoded protein 9 (314 aa).

The protein belongs to the nucleosome assembly protein (NAP) family.

It is found in the cytoplasm. The protein resides in the nucleus. May be involved in sperm differentiation and proliferation. In Homo sapiens (Human), this protein is Testis-specific Y-encoded protein 9.